The sequence spans 549 residues: Arginine-containing cyclodipeptide synthase amaA (549 aa).

A Conserved DDXXE motif motif is present at residues 445 to 449 (DDRAE).

It belongs to the arginine-containing cyclodipeptide synthase family.

The catalysed reaction is L-prolyl-tRNA(Pro) + L-arginyl-tRNA(Arg) = cyclo(L-arginyl-L-prolyl) + tRNA(Pro) + tRNA(Arg) + 2 H(+). The protein operates within secondary metabolite biosynthesis. Arginine-containing cyclodipeptide synthase; part of the cluster that mediates the biosynthesis of a highly modified cyclo-arginine-proline dipeptide (cRP). Within the pathway, amaA acts as the scaffold-generating enzyme and is responsible for formation of the cyclo-Arg-Pro diketopiperazine (cRW) from L-arginyl-tRNA(Arg) + L-prolyl-tRNA(Pro). Additional enzymes from the cluster then further modify the cyclo-Arg-Pro diketopiperazine (cRW) scaffold. The chain is Arginine-containing cyclodipeptide synthase amaA from Apiospora montagnei (Sphaeria apiospora).